The following is a 75-amino-acid chain: Scuwaprin-a (75 aa).

An N-terminal signal peptide occupies residues 1-24 (MSSGGLLLLLGLLTLWAELTPVSG). The WAP domain occupies 27 to 72 (RPKKPGLCPPRPQKPPCVKECKNDWSCPGQQKCCSYGCIDECRDPI). Intrachain disulfides connect cysteine 34–cysteine 60, cysteine 43–cysteine 64, cysteine 47–cysteine 59, and cysteine 53–cysteine 68.

The protein belongs to the venom waprin family. In terms of tissue distribution, expressed by the venom gland.

Its subcellular location is the secreted. Its function is as follows. Damages membranes of susceptible bacteria. Has no hemolytic activity. Not toxic to mice. Does not inhibit the proteinases elastase and cathepsin G. In Oxyuranus scutellatus scutellatus (Australian taipan), this protein is Scuwaprin-a.